The sequence spans 223 residues: V-type ATP synthase subunit D (223 aa).

Residues 203–223 are disordered; that stretch reads AREAEEEGGRPNPQVEIGAGL.

This sequence belongs to the V-ATPase D subunit family.

Produces ATP from ADP in the presence of a proton gradient across the membrane. The chain is V-type ATP synthase subunit D from Thermus thermophilus (strain ATCC BAA-163 / DSM 7039 / HB27).